A 363-amino-acid chain; its full sequence is Putative RAD2-like endonuclease 095R (363 aa).

The protein belongs to the XPG/RAD2 endonuclease family. It depends on Mg(2+) as a cofactor.

It localises to the host nucleus. Its function is as follows. Probable endonuclease. The protein is Putative RAD2-like endonuclease 095R of Frog virus 3 (isolate Goorha) (FV-3).